A 337-amino-acid polypeptide reads, in one-letter code: Tetraacyldisaccharide 4'-kinase (337 aa).

An ATP-binding site is contributed by 55-62 (TIGGNGKT).

Belongs to the LpxK family.

The catalysed reaction is a lipid A disaccharide + ATP = a lipid IVA + ADP + H(+). It participates in glycolipid biosynthesis; lipid IV(A) biosynthesis; lipid IV(A) from (3R)-3-hydroxytetradecanoyl-[acyl-carrier-protein] and UDP-N-acetyl-alpha-D-glucosamine: step 6/6. Transfers the gamma-phosphate of ATP to the 4'-position of a tetraacyldisaccharide 1-phosphate intermediate (termed DS-1-P) to form tetraacyldisaccharide 1,4'-bis-phosphate (lipid IVA). This is Tetraacyldisaccharide 4'-kinase from Blochmanniella pennsylvanica (strain BPEN).